The sequence spans 405 residues: Phosphoglycerate kinase (405 aa).

Substrate is bound by residues 23–25 (DFN), arginine 39, 62–65 (HLGR), arginine 121, and arginine 154. ATP is bound by residues lysine 207, glycine 298, glutamate 329, and 355–358 (GGDT).

Belongs to the phosphoglycerate kinase family. In terms of assembly, monomer.

It is found in the cytoplasm. The enzyme catalyses (2R)-3-phosphoglycerate + ATP = (2R)-3-phospho-glyceroyl phosphate + ADP. Its pathway is carbohydrate degradation; glycolysis; pyruvate from D-glyceraldehyde 3-phosphate: step 2/5. The chain is Phosphoglycerate kinase from Campylobacter hominis (strain ATCC BAA-381 / DSM 21671 / CCUG 45161 / LMG 19568 / NCTC 13146 / CH001A).